The primary structure comprises 524 residues: Lysine--tRNA ligase (524 aa).

Positions 39-47 match the 'HIGH' region motif; it reads ASGIPHMGS. The 'KMSKS' region motif lies at 294-298; it reads KISKS. Lys297 contacts ATP.

This sequence belongs to the class-I aminoacyl-tRNA synthetase family.

The protein resides in the cytoplasm. It carries out the reaction tRNA(Lys) + L-lysine + ATP = L-lysyl-tRNA(Lys) + AMP + diphosphate. The protein is Lysine--tRNA ligase (lysS) of Cenarchaeum symbiosum.